The chain runs to 1448 residues: Gag-Pol polyprotein (1448 aa).

Residue glycine 2 is the site of N-myristoyl glycine; by host attachment. A Nuclear export signal motif is present at residues 16-22 (LEKIRLR). Residues 26–32 (KKKYMLK) carry the Nuclear localization signal motif. Over residues 218 to 227 (HPQQAPQQGQ) the composition is skewed to low complexity. Residues 218–237 (HPQQAPQQGQLREPSGSDIA) are disordered. 2 consecutive CCHC-type zinc fingers follow at residues 391-408 (IKCW…QCRA) and 412-429 (QGCW…KCPN). The interval 440 to 461 (LGKEAPQFPHGSSASGADANCS) is disordered. The region spanning 517–586 (VEVLLDTGAD…TPINIFGRNL (70 aa)) is the Peptidase A2 domain. The active-site For protease activity; shared with dimeric partner is aspartate 522. The 191-residue stretch at 640–830 (DGQLEEAPPT…PPFQWMGYEL (191 aa)) folds into the Reverse transcriptase domain. Aspartate 706, aspartate 781, and aspartate 782 together coordinate Mg(2+). The RT 'primer grip' stretch occupies residues 823 to 831 (FQWMGYELW). A Tryptophan repeat motif motif is present at residues 993–1009 (WEQWWTDYWQVTWIPEW). One can recognise an RNase H type-1 domain in the interval 1029–1152 (IEGEETYYVD…IDHLVSQGIR (124 aa)). Mg(2+)-binding residues include aspartate 1038, glutamate 1073, aspartate 1093, and aspartate 1144. The Integrase-type zinc-finger motif lies at 1158–1199 (EKIEPAQEEHSKYHSNIKELVFKFGLPRLVAKQIVDTCDKCH). Positions 1167, 1171, 1195, and 1198 each coordinate Zn(2+). The Integrase catalytic domain occupies 1209-1359 (VNSDLGTWQM…TPAERLINMI (151 aa)). Positions 1219 and 1271 each coordinate Mg(2+). Residues 1378–1425 (FRVYYREGRDQLWKGPGELLWKGEGAVILKVGTDIKVVPRRKAKIIKD) constitute a DNA-binding region (integrase-type). The tract at residues 1426–1448 (YGGGKEMDSSSHMEDTGEAREVA) is disordered.

As to quaternary structure, homotrimer. Interacts with gp41 (via C-terminus). Homodimer. The active site consists of two apposed aspartic acid residues. In terms of assembly, heterodimer of p66 RT and p51 RT (RT p66/p51). Heterodimerization of RT is essential for DNA polymerase activity. Despite the sequence identities, p66 RT and p51 RT have distinct folding. As to quaternary structure, homotetramer; may further associate as a homohexadecamer. Mg(2+) serves as cofactor. Specific enzymatic cleavages by the viral protease yield mature proteins. The protease is released by autocatalytic cleavage. The polyprotein is cleaved during and after budding, this process is termed maturation. Proteolytic cleavage of p66 RT removes the RNase H domain to yield the p51 RT subunit. Post-translationally, capsid protein p24 is phosphorylated.

The protein resides in the virion. It localises to the host nucleus. It is found in the host cytoplasm. Its subcellular location is the host cell membrane. It catalyses the reaction Specific for a P1 residue that is hydrophobic, and P1' variable, but often Pro.. The catalysed reaction is Endohydrolysis of RNA in RNA/DNA hybrids. Three different cleavage modes: 1. sequence-specific internal cleavage of RNA. Human immunodeficiency virus type 1 and Moloney murine leukemia virus enzymes prefer to cleave the RNA strand one nucleotide away from the RNA-DNA junction. 2. RNA 5'-end directed cleavage 13-19 nucleotides from the RNA end. 3. DNA 3'-end directed cleavage 15-20 nucleotides away from the primer terminus.. It carries out the reaction 3'-end directed exonucleolytic cleavage of viral RNA-DNA hybrid.. The enzyme catalyses DNA(n) + a 2'-deoxyribonucleoside 5'-triphosphate = DNA(n+1) + diphosphate. With respect to regulation, the viral protease is inhibited by many synthetic protease inhibitors (PIs), such as amprenavir, atazanavir, indinavir, loprinavir, nelfinavir, ritonavir and saquinavir. RT can be inhibited either by nucleoside RT inhibitors (NRTIs) or by non nucleoside RT inhibitors (NNRTIs). NRTIs act as chain terminators, whereas NNRTIs inhibit DNA polymerization by binding a small hydrophobic pocket near the RT active site and inducing an allosteric change in this region. Classical NRTIs are abacavir, adefovir (PMEA), didanosine (ddI), lamivudine (3TC), stavudine (d4T), tenofovir (PMPA), zalcitabine (ddC), and zidovudine (AZT). Classical NNRTIs are atevirdine (BHAP U-87201E), delavirdine, efavirenz (DMP-266), emivirine (I-EBU), and nevirapine (BI-RG-587). The tritherapies used as a basic effective treatment of AIDS associate two NRTIs and one NNRTI. Use of protease inhibitors in tritherapy regimens permit more ambitious therapeutic strategies. Gag-Pol polyprotein and Gag polyprotein may regulate their own translation, by the binding genomic RNA in the 5'-UTR. At low concentration, Gag-Pol and Gag would promote translation, whereas at high concentration, the polyproteins encapsidate genomic RNA and then shut off translation. Its function is as follows. Matrix protein p17 has two main functions: in infected cell, it targets Gag and Gag-pol polyproteins to the plasma membrane via a multipartite membrane-binding signal, that includes its myristointegration complex. The myristoylation signal and the NLS exert conflicting influences its subcellular localization. The key regulation of these motifs might be phosphorylation of a portion of MA molecules on the C-terminal tyrosine at the time of virus maturation, by virion-associated cellular tyrosine kinase. Implicated in the release from host cell mediated by Vpu. Functionally, capsid protein p24 forms the conical core that encapsulates the genomic RNA-nucleocapsid complex in the virion. The core is constituted by capsid protein hexamer subunits. The core is disassembled soon after virion entry. Interaction with host PPIA/CYPA protects the virus from restriction by host TRIM5-alpha and from an unknown antiviral activity in host cells. This capsid restriction by TRIM5 is one of the factors which restricts SIV to the simian species. In terms of biological role, nucleocapsid protein p7 encapsulates and protects viral dimeric unspliced (genomic) RNA. Binds these RNAs through its zinc fingers. Facilitates rearangement of nucleic acid secondary structure during retrotranscription of genomic RNA. This capability is referred to as nucleic acid chaperone activity. The aspartyl protease mediates proteolytic cleavages of Gag and Gag-Pol polyproteins during or shortly after the release of the virion from the plasma membrane. Cleavages take place as an ordered, step-wise cascade to yield mature proteins. This process is called maturation. Displays maximal activity during the budding process just prior to particle release from the cell. Also cleaves Nef and Vif, probably concomitantly with viral structural proteins on maturation of virus particles. Hydrolyzes host EIF4GI and PABP1 in order to shut off the capped cellular mRNA translation. The resulting inhibition of cellular protein synthesis serves to ensure maximal viral gene expression and to evade host immune response. Its function is as follows. Reverse transcriptase/ribonuclease H (RT) is a multifunctional enzyme that converts the viral dimeric RNA genome into dsDNA in the cytoplasm, shortly after virus entry into the cell. This enzyme displays a DNA polymerase activity that can copy either DNA or RNA templates, and a ribonuclease H (RNase H) activity that cleaves the RNA strand of RNA-DNA heteroduplexes in a partially processive 3' to 5' endonucleasic mode. Conversion of viral genomic RNA into dsDNA requires many steps. A tRNA binds to the primer-binding site (PBS) situated at the 5'-end of the viral RNA. RT uses the 3' end of the tRNA primer to perform a short round of RNA-dependent minus-strand DNA synthesis. The reading proceeds through the U5 region and ends after the repeated (R) region which is present at both ends of viral RNA. The portion of the RNA-DNA heteroduplex is digested by the RNase H, resulting in a ssDNA product attached to the tRNA primer. This ssDNA/tRNA hybridizes with the identical R region situated at the 3' end of viral RNA. This template exchange, known as minus-strand DNA strong stop transfer, can be either intra- or intermolecular. RT uses the 3' end of this newly synthesized short ssDNA to perform the RNA-dependent minus-strand DNA synthesis of the whole template. RNase H digests the RNA template except for two polypurine tracts (PPTs) situated at the 5'-end and near the center of the genome. It is not clear if both polymerase and RNase H activities are simultaneous. RNase H can probably proceed both in a polymerase-dependent (RNA cut into small fragments by the same RT performing DNA synthesis) and a polymerase-independent mode (cleavage of remaining RNA fragments by free RTs). Secondly, RT performs DNA-directed plus-strand DNA synthesis using the PPTs that have not been removed by RNase H as primers. PPTs and tRNA primers are then removed by RNase H. The 3' and 5' ssDNA PBS regions hybridize to form a circular dsDNA intermediate. Strand displacement synthesis by RT to the PBS and PPT ends produces a blunt ended, linear dsDNA copy of the viral genome that includes long terminal repeats (LTRs) at both ends. Functionally, integrase catalyzes viral DNA integration into the host chromosome, by performing a series of DNA cutting and joining reactions. This enzyme activity takes place after virion entry into a cell and reverse transcription of the RNA genome in dsDNA. The first step in the integration process is 3' processing. This step requires a complex comprising the viral genome, matrix protein, Vpr and integrase. This complex is called the pre-integration complex (PIC). The integrase protein removes 2 nucleotides from each 3' end of the viral DNA, leaving recessed CA OH's at the 3' ends. In the second step, the PIC enters cell nucleus. This process is mediated through integrase and Vpr proteins, and allows the virus to infect a non dividing cell. This ability to enter the nucleus is specific of lentiviruses, other retroviruses cannot and rely on cell division to access cell chromosomes. In the third step, termed strand transfer, the integrase protein joins the previously processed 3' ends to the 5' ends of strands of target cellular DNA at the site of integration. The 5'-ends are produced by integrase-catalyzed staggered cuts, 5 bp apart. A Y-shaped, gapped, recombination intermediate results, with the 5'-ends of the viral DNA strands and the 3' ends of target DNA strands remaining unjoined, flanking a gap of 5 bp. The last step is viral DNA integration into host chromosome. This involves host DNA repair synthesis in which the 5 bp gaps between the unjoined strands are filled in and then ligated. Since this process occurs at both cuts flanking the SIV genome, a 5 bp duplication of host DNA is produced at the ends of SIV integration. Alternatively, Integrase may catalyze the excision of viral DNA just after strand transfer, this is termed disintegration. The protein is Gag-Pol polyprotein (gag-pol) of Cercopithecidae (Old World monkeys).